The following is a 145-amino-acid chain: Ornithine decarboxylase antizyme (145 aa).

It belongs to the ODC antizyme family. As to quaternary structure, interacts with ODC1 and thereby sterically blocks ODC homodimerization.

In terms of biological role, ornithine decarboxylase (ODC) antizyme protein that negatively regulates ODC activity and intracellular polyamine biosynthesis and uptake in response to increased intracellular polyamine levels. Binds to ODC monomers, inhibiting the assembly of the functional ODC homodimer, and targets the monomers for ubiquitin-independent proteolytic destruction by the 26S proteasome. In Onchocerca volvulus, this protein is Ornithine decarboxylase antizyme.